A 420-amino-acid polypeptide reads, in one-letter code: 3-phosphoshikimate 1-carboxyvinyltransferase (420 aa).

Residues lysine 26, serine 27, and arginine 31 each coordinate 3-phosphoshikimate. Phosphoenolpyruvate is bound at residue lysine 26. Glycine 97 and arginine 125 together coordinate phosphoenolpyruvate. The 3-phosphoshikimate site is built by serine 170, serine 171, glutamine 172, aspartate 297, asparagine 320, and lysine 324. Residue glutamine 172 participates in phosphoenolpyruvate binding. Aspartate 297 functions as the Proton acceptor in the catalytic mechanism. Phosphoenolpyruvate-binding residues include arginine 328, arginine 375, and lysine 400.

The protein belongs to the EPSP synthase family. Monomer.

Its subcellular location is the cytoplasm. The enzyme catalyses 3-phosphoshikimate + phosphoenolpyruvate = 5-O-(1-carboxyvinyl)-3-phosphoshikimate + phosphate. It participates in metabolic intermediate biosynthesis; chorismate biosynthesis; chorismate from D-erythrose 4-phosphate and phosphoenolpyruvate: step 6/7. In terms of biological role, catalyzes the transfer of the enolpyruvyl moiety of phosphoenolpyruvate (PEP) to the 5-hydroxyl of shikimate-3-phosphate (S3P) to produce enolpyruvyl shikimate-3-phosphate and inorganic phosphate. The polypeptide is 3-phosphoshikimate 1-carboxyvinyltransferase (Rhizobium leguminosarum bv. trifolii (strain WSM2304)).